A 149-amino-acid polypeptide reads, in one-letter code: D-aminoacyl-tRNA deacylase (149 aa).

Positions 137–138 (GP) match the Gly-cisPro motif, important for rejection of L-amino acids motif.

The protein belongs to the DTD family. Homodimer.

The protein localises to the cytoplasm. It carries out the reaction glycyl-tRNA(Ala) + H2O = tRNA(Ala) + glycine + H(+). The catalysed reaction is a D-aminoacyl-tRNA + H2O = a tRNA + a D-alpha-amino acid + H(+). Its function is as follows. An aminoacyl-tRNA editing enzyme that deacylates mischarged D-aminoacyl-tRNAs. Also deacylates mischarged glycyl-tRNA(Ala), protecting cells against glycine mischarging by AlaRS. Acts via tRNA-based rather than protein-based catalysis; rejects L-amino acids rather than detecting D-amino acids in the active site. By recycling D-aminoacyl-tRNA to D-amino acids and free tRNA molecules, this enzyme counteracts the toxicity associated with the formation of D-aminoacyl-tRNA entities in vivo and helps enforce protein L-homochirality. The polypeptide is D-aminoacyl-tRNA deacylase (Thermotoga petrophila (strain ATCC BAA-488 / DSM 13995 / JCM 10881 / RKU-1)).